We begin with the raw amino-acid sequence, 71 residues long: Small ribosomal subunit protein bS21 (71 aa).

Belongs to the bacterial ribosomal protein bS21 family.

This Alcanivorax borkumensis (strain ATCC 700651 / DSM 11573 / NCIMB 13689 / SK2) protein is Small ribosomal subunit protein bS21.